We begin with the raw amino-acid sequence, 370 residues long: Histidinol-phosphate aminotransferase 1 (370 aa).

Lysine 222 carries the N6-(pyridoxal phosphate)lysine modification.

It belongs to the class-II pyridoxal-phosphate-dependent aminotransferase family. Histidinol-phosphate aminotransferase subfamily. Homodimer. It depends on pyridoxal 5'-phosphate as a cofactor.

The catalysed reaction is L-histidinol phosphate + 2-oxoglutarate = 3-(imidazol-4-yl)-2-oxopropyl phosphate + L-glutamate. The protein operates within amino-acid biosynthesis; L-histidine biosynthesis; L-histidine from 5-phospho-alpha-D-ribose 1-diphosphate: step 7/9. The protein is Histidinol-phosphate aminotransferase 1 of Bacillus thuringiensis subsp. konkukian (strain 97-27).